The following is a 163-amino-acid chain: Crossover junction endodeoxyribonuclease RuvC (163 aa).

Residues aspartate 7, glutamate 67, and aspartate 140 contribute to the active site. Mg(2+) is bound by residues aspartate 7, glutamate 67, and aspartate 140.

This sequence belongs to the RuvC family. As to quaternary structure, homodimer which binds Holliday junction (HJ) DNA. The HJ becomes 2-fold symmetrical on binding to RuvC with unstacked arms; it has a different conformation from HJ DNA in complex with RuvA. In the full resolvosome a probable DNA-RuvA(4)-RuvB(12)-RuvC(2) complex forms which resolves the HJ. Mg(2+) is required as a cofactor.

The protein resides in the cytoplasm. It carries out the reaction Endonucleolytic cleavage at a junction such as a reciprocal single-stranded crossover between two homologous DNA duplexes (Holliday junction).. Its function is as follows. The RuvA-RuvB-RuvC complex processes Holliday junction (HJ) DNA during genetic recombination and DNA repair. Endonuclease that resolves HJ intermediates. Cleaves cruciform DNA by making single-stranded nicks across the HJ at symmetrical positions within the homologous arms, yielding a 5'-phosphate and a 3'-hydroxyl group; requires a central core of homology in the junction. The consensus cleavage sequence is 5'-(A/T)TT(C/G)-3'. Cleavage occurs on the 3'-side of the TT dinucleotide at the point of strand exchange. HJ branch migration catalyzed by RuvA-RuvB allows RuvC to scan DNA until it finds its consensus sequence, where it cleaves and resolves the cruciform DNA. The polypeptide is Crossover junction endodeoxyribonuclease RuvC (Petrotoga mobilis (strain DSM 10674 / SJ95)).